The sequence spans 1013 residues: Receptor-type tyrosine-protein phosphatase N2 (1013 aa).

An N-terminal signal peptide occupies residues 1–19 (MALPLLLLLLLLLPPRVLP). The interval 1–419 (MALPLLLLLL…PGALPFAKPL (419 aa)) is involved in localization to secretory granules; interaction with CPE. The Extracellular segment spans residues 20–613 (AAPSSVPHGR…QAEQEDSTKF (594 aa)). Disordered stretches follow at residues 116–137 (RHPE…ERRY), 273–302 (MPRP…TGEG), 342–382 (DHRG…VQDD), and 401–487 (LQDH…SLPA). A compositionally biased stretch (basic and acidic residues) spans 419-430 (LKMERKKSERPE). A phosphoserine mark is found at S434 and S435. The N-linked (GlcNAc...) asparagine glycan is linked to N562. The chain crosses the membrane as a helical span at residues 614-634 (IALTLVSLACILGVLLASGLI). At 635–1013 (YCLRHSSQHR…VNAILKALPQ (379 aa)) the chain is on the cytoplasmic side. The Tyrosine-based internalization motif motif lies at 664-673 (YQELCRQRMA). Residues 673–717 (ATRPPDRPEGPHTSRISSVSSQFSDGPMPSPSARSSASSWSEEPV) are disordered. The segment covering 686–696 (SRISSVSSQFS) has biased composition (polar residues). A phosphoserine mark is found at S690 and S696. The segment covering 703–717 (PSARSSASSWSEEPV) has biased composition (low complexity). One can recognise a Tyrosine-protein phosphatase domain in the interval 743-1003 (LEKEWEALCA…EFALTAVAEE (261 aa)). Residues D911 and 943 to 949 (CSDGAGR) contribute to the substrate site. C943 functions as the Phosphocysteine intermediate in the catalytic mechanism. Position 968 is an N6-acetyllysine (K968). Q988 contacts substrate. A Leucine-based sorting signal motif is present at residues 1002–1008 (EEVNAIL).

It belongs to the protein-tyrosine phosphatase family. Receptor class 8 subfamily. In terms of assembly, self-associates. Interacts (via cytoplasmic domain) with PTPRN (via cytoplasmic domain). Interacts (precursor form) with CPE. Interacts with HAP1. Interacts with AP2A1 or AP2A2 and AP1G1; indicative for an association with adaptor protein complex 2 (AP-2) and adaptor protein complex 1 (AP-1). Interacts with AP2M1; indicative for an association with adaptor protein complex 2 (AP-2). Interacts with MYO5A. In terms of processing, subject to proteolytic cleavage at multiple sites. Detected in pancreatic islets and adrenal medulla.

The protein localises to the cytoplasmic vesicle. It localises to the secretory vesicle membrane. It is found in the secretory vesicle. The protein resides in the synaptic vesicle membrane. It catalyses the reaction O-phospho-L-tyrosyl-[protein] + H2O = L-tyrosyl-[protein] + phosphate. Plays a role in vesicle-mediated secretory processes. Required for normal accumulation of secretory vesicles in hippocampus, pituitary and pancreatic islets. Required for the accumulation of normal levels of insulin-containing vesicles and preventing their degradation. Plays a role in insulin secretion in response to glucose stimuli. Required for normal accumulation of the neurotransmitters norepinephrine, dopamine and serotonin in the brain. In females, but not in males, required for normal accumulation and secretion of pituitary hormones, such as luteinizing hormone (LH) and follicle-stimulating hormone (FSH). Required to maintain normal levels of renin expression and renin release. May regulate catalytic active protein-tyrosine phosphatases such as PTPRA through dimerization. Has phosphatidylinositol phosphatase activity; the PIPase activity is involved in its ability to regulate insulin secretion. Can dephosphorylate phosphatidylinositol 4,5-biphosphate, phosphatidylinositol 5-phosphate and phosphatidylinositol 3-phosphate. Regulates PI(4,5)P2 level in the plasma membrane and localization of cofilin at the plasma membrane and thus is indirectly involved in regulation of actin dynamics related to cell migration and metastasis; upon hydrolysis of PI(4,5)P2 cofilin is released from the plasma membrane and acts in the cytoplasm in severing F-actin filaments. In Macaca nemestrina (Pig-tailed macaque), this protein is Receptor-type tyrosine-protein phosphatase N2 (PTPRN2).